A 124-amino-acid chain; its full sequence is Small ribosomal subunit protein uS12 (124 aa).

The interval 1-24 (MPTINQLIKKPRKSQKEKTASPAL) is disordered. Aspartate 89 is subject to 3-methylthioaspartic acid.

The protein belongs to the universal ribosomal protein uS12 family. In terms of assembly, part of the 30S ribosomal subunit. Contacts proteins S8 and S17. May interact with IF1 in the 30S initiation complex.

Its function is as follows. With S4 and S5 plays an important role in translational accuracy. Functionally, interacts with and stabilizes bases of the 16S rRNA that are involved in tRNA selection in the A site and with the mRNA backbone. Located at the interface of the 30S and 50S subunits, it traverses the body of the 30S subunit contacting proteins on the other side and probably holding the rRNA structure together. The combined cluster of proteins S8, S12 and S17 appears to hold together the shoulder and platform of the 30S subunit. The protein is Small ribosomal subunit protein uS12 of Borrelia hermsii (strain HS1 / DAH).